Here is a 165-residue protein sequence, read N- to C-terminus: Crossover junction endodeoxyribonuclease RuvC (165 aa).

Catalysis depends on residues Asp7, Glu66, and Asp138. The Mg(2+) site is built by Asp7, Glu66, and Asp138.

The protein belongs to the RuvC family. In terms of assembly, homodimer which binds Holliday junction (HJ) DNA. The HJ becomes 2-fold symmetrical on binding to RuvC with unstacked arms; it has a different conformation from HJ DNA in complex with RuvA. In the full resolvosome a probable DNA-RuvA(4)-RuvB(12)-RuvC(2) complex forms which resolves the HJ. The cofactor is Mg(2+).

It is found in the cytoplasm. The enzyme catalyses Endonucleolytic cleavage at a junction such as a reciprocal single-stranded crossover between two homologous DNA duplexes (Holliday junction).. In terms of biological role, the RuvA-RuvB-RuvC complex processes Holliday junction (HJ) DNA during genetic recombination and DNA repair. Endonuclease that resolves HJ intermediates. Cleaves cruciform DNA by making single-stranded nicks across the HJ at symmetrical positions within the homologous arms, yielding a 5'-phosphate and a 3'-hydroxyl group; requires a central core of homology in the junction. The consensus cleavage sequence is 5'-(A/T)TT(C/G)-3'. Cleavage occurs on the 3'-side of the TT dinucleotide at the point of strand exchange. HJ branch migration catalyzed by RuvA-RuvB allows RuvC to scan DNA until it finds its consensus sequence, where it cleaves and resolves the cruciform DNA. This is Crossover junction endodeoxyribonuclease RuvC from Ruegeria pomeroyi (strain ATCC 700808 / DSM 15171 / DSS-3) (Silicibacter pomeroyi).